A 484-amino-acid polypeptide reads, in one-letter code: tRNA sulfurtransferase (484 aa).

Residues 63 to 167 (QAFGERLACI…GDKLYMVTKR (105 aa)) enclose the THUMP domain. Residues 185-186 (LI), lysine 267, glycine 289, and glutamine 298 contribute to the ATP site. A disulfide bond links cysteine 346 and cysteine 458. One can recognise a Rhodanese domain in the interval 406–484 (IDTNEVVIDI…GYHNVKVYRP (79 aa)). Residue cysteine 458 is the Cysteine persulfide intermediate of the active site.

The protein belongs to the ThiI family.

Its subcellular location is the cytoplasm. The enzyme catalyses [ThiI sulfur-carrier protein]-S-sulfanyl-L-cysteine + a uridine in tRNA + 2 reduced [2Fe-2S]-[ferredoxin] + ATP + H(+) = [ThiI sulfur-carrier protein]-L-cysteine + a 4-thiouridine in tRNA + 2 oxidized [2Fe-2S]-[ferredoxin] + AMP + diphosphate. The catalysed reaction is [ThiS sulfur-carrier protein]-C-terminal Gly-Gly-AMP + S-sulfanyl-L-cysteinyl-[cysteine desulfurase] + AH2 = [ThiS sulfur-carrier protein]-C-terminal-Gly-aminoethanethioate + L-cysteinyl-[cysteine desulfurase] + A + AMP + 2 H(+). The protein operates within cofactor biosynthesis; thiamine diphosphate biosynthesis. Its function is as follows. Catalyzes the ATP-dependent transfer of a sulfur to tRNA to produce 4-thiouridine in position 8 of tRNAs, which functions as a near-UV photosensor. Also catalyzes the transfer of sulfur to the sulfur carrier protein ThiS, forming ThiS-thiocarboxylate. This is a step in the synthesis of thiazole, in the thiamine biosynthesis pathway. The sulfur is donated as persulfide by IscS. This chain is tRNA sulfurtransferase, found in Shewanella sp. (strain ANA-3).